A 185-amino-acid polypeptide reads, in one-letter code: Large ribosomal subunit protein bL25 (185 aa).

This sequence belongs to the bacterial ribosomal protein bL25 family. CTC subfamily. As to quaternary structure, part of the 50S ribosomal subunit; part of the 5S rRNA/L5/L18/L25 subcomplex. Contacts the 5S rRNA. Binds to the 5S rRNA independently of L5 and L18.

Its function is as follows. This is one of the proteins that binds to the 5S RNA in the ribosome where it forms part of the central protuberance. The sequence is that of Large ribosomal subunit protein bL25 from Chlamydia muridarum (strain MoPn / Nigg).